The sequence spans 366 residues: Aminomethyltransferase (366 aa).

It belongs to the GcvT family. The glycine cleavage system is composed of four proteins: P, T, L and H.

The enzyme catalyses N(6)-[(R)-S(8)-aminomethyldihydrolipoyl]-L-lysyl-[protein] + (6S)-5,6,7,8-tetrahydrofolate = N(6)-[(R)-dihydrolipoyl]-L-lysyl-[protein] + (6R)-5,10-methylene-5,6,7,8-tetrahydrofolate + NH4(+). The glycine cleavage system catalyzes the degradation of glycine. The protein is Aminomethyltransferase of Bacillus anthracis (strain A0248).